The chain runs to 236 residues: 2,3,4,5-tetrahydropyridine-2,6-dicarboxylate N-acetyltransferase (236 aa).

It belongs to the transferase hexapeptide repeat family. DapH subfamily.

It carries out the reaction (S)-2,3,4,5-tetrahydrodipicolinate + acetyl-CoA + H2O = L-2-acetamido-6-oxoheptanedioate + CoA. It functions in the pathway amino-acid biosynthesis; L-lysine biosynthesis via DAP pathway; LL-2,6-diaminopimelate from (S)-tetrahydrodipicolinate (acetylase route): step 1/3. Functionally, catalyzes the transfer of an acetyl group from acetyl-CoA to tetrahydrodipicolinate. The polypeptide is 2,3,4,5-tetrahydropyridine-2,6-dicarboxylate N-acetyltransferase (Clostridium botulinum (strain Okra / Type B1)).